The sequence spans 369 residues: Iron-sulfur cluster carrier protein (369 aa).

Residue 115–122 (GKGGVGKS) coordinates ATP.

It belongs to the Mrp/NBP35 ATP-binding proteins family. As to quaternary structure, homodimer. Holo-ApbC forms a mixture of homodimers and homotetramers.

In terms of biological role, binds and transfers iron-sulfur (Fe-S) clusters to target apoproteins. Can hydrolyze ATP. Both activities are required for function in vivo, but the ability to hydrolyze ATP is not necessary for Fe-S cluster transfer. This is Iron-sulfur cluster carrier protein from Salmonella typhimurium (strain LT2 / SGSC1412 / ATCC 700720).